Consider the following 941-residue polypeptide: Endoglucanase (941 aa).

The signal sequence occupies residues 1–29 (MKIKQIKQSLSLLLIITLIMSLFVPMASA). 3 consecutive SLH domains span residues 37-94 (NAFP…GLEA), 95-158 (SSKD…LSLP), and 161-224 (QREY…DYLY). Catalysis depends on Glu373, which acts as the Proton donor. Glu485 acts as the Nucleophile in catalysis.

Belongs to the glycosyl hydrolase 5 (cellulase A) family.

The catalysed reaction is Endohydrolysis of (1-&gt;4)-beta-D-glucosidic linkages in cellulose, lichenin and cereal beta-D-glucans.. This is Endoglucanase from Bacillus sp. (strain KSM-635).